The sequence spans 302 residues: NmrA-like family domain-containing protein DDB_G0286605 (302 aa).

Residues 9 to 14 (GGTGYQ), 35 to 39 (RNPES), 56 to 57 (DE), 78 to 80 (TNS), Lys130, and 157 to 160 (YFQN) each bind NADP(+).

This sequence belongs to the NmrA-type oxidoreductase family.

Its function is as follows. May be a redox sensor protein. This Dictyostelium discoideum (Social amoeba) protein is NmrA-like family domain-containing protein DDB_G0286605.